Here is a 151-residue protein sequence, read N- to C-terminus: Small ribosomal subunit protein uS15 (151 aa).

Residues methionine 1 to threonine 20 form a disordered region.

It belongs to the universal ribosomal protein uS15 family. In terms of assembly, part of the 30S ribosomal subunit.

The sequence is that of Small ribosomal subunit protein uS15 from Methanococcus vannielii (strain ATCC 35089 / DSM 1224 / JCM 13029 / OCM 148 / SB).